We begin with the raw amino-acid sequence, 137 residues long: Large ribosomal subunit protein uL16 (137 aa).

The protein belongs to the universal ribosomal protein uL16 family. In terms of assembly, part of the 50S ribosomal subunit.

Functionally, binds 23S rRNA and is also seen to make contacts with the A and possibly P site tRNAs. The polypeptide is Large ribosomal subunit protein uL16 (Magnetococcus marinus (strain ATCC BAA-1437 / JCM 17883 / MC-1)).